Reading from the N-terminus, the 662-residue chain is DNA ligase (662 aa).

NAD(+) contacts are provided by residues 32–36 (DAEYD), 75–76 (SL), and E106. Residue K108 is the N6-AMP-lysine intermediate of the active site. NAD(+) is bound by residues R129, E164, K271, and K295. Positions 389, 392, 407, and 413 each coordinate Zn(2+). Positions 580 to 662 (SSNSVLNNKI…HKVISLGVFK (83 aa)) constitute a BRCT domain.

It belongs to the NAD-dependent DNA ligase family. LigA subfamily. Mg(2+) is required as a cofactor. It depends on Mn(2+) as a cofactor.

It carries out the reaction NAD(+) + (deoxyribonucleotide)n-3'-hydroxyl + 5'-phospho-(deoxyribonucleotide)m = (deoxyribonucleotide)n+m + AMP + beta-nicotinamide D-nucleotide.. In terms of biological role, DNA ligase that catalyzes the formation of phosphodiester linkages between 5'-phosphoryl and 3'-hydroxyl groups in double-stranded DNA using NAD as a coenzyme and as the energy source for the reaction. It is essential for DNA replication and repair of damaged DNA. This is DNA ligase from Wolbachia pipientis wMel.